The sequence spans 179 residues: Inosine/xanthosine triphosphatase (179 aa).

Substrate is bound at residue 8–13 (TTNPAK). Positions 38 and 68 each coordinate Mg(2+). A substrate-binding site is contributed by 68–69 (EA).

This sequence belongs to the YjjX NTPase family. Homodimer. It depends on Mg(2+) as a cofactor. Mn(2+) is required as a cofactor.

The enzyme catalyses XTP + H2O = XDP + phosphate + H(+). The catalysed reaction is ITP + H2O = IDP + phosphate + H(+). Its function is as follows. Phosphatase that hydrolyzes non-canonical purine nucleotides such as XTP and ITP to their respective diphosphate derivatives. Probably excludes non-canonical purines from DNA/RNA precursor pool, thus preventing their incorporation into DNA/RNA and avoiding chromosomal lesions. The protein is Inosine/xanthosine triphosphatase of Pectobacterium carotovorum subsp. carotovorum (strain PC1).